Here is a 535-residue protein sequence, read N- to C-terminus: Sucrose transport protein SUT5 (535 aa).

The Cytoplasmic segment spans residues 1–53 (MEEGRRGDREGKSAAGWTALSTTKTTLEEKRRLQANGSVGGDAGTSGFRRIVR). The chain crosses the membrane as a helical span at residues 54 to 74 (LFFACMVAGGIQYGWALQLSL). Residues 75–87 (LSPYSQTLGISHS) are Extracellular-facing. The helical transmembrane segment at 88 to 108 (YVSLTWICGPIAGFVVQPIVG) threads the bilayer. At 109-122 (YYSDRCTMKMGRRR) the chain is on the cytoplasmic side. Residues 123 to 143 (PFILVGCLIICISVMIIGFSA) form a helical membrane-spanning segment. Topologically, residues 144-163 (DIGRHLGDTKEHCSTYTGPR) are extracellular. A helical transmembrane segment spans residues 164-184 (WSAAMVYIVGFWFLDFANNTV). The Cytoplasmic segment spans residues 185 to 203 (QGPARAMMADLSAGHHGPN). Residues 204–224 (VGQSIFSLWMAIGSVLGYLSG) form a helical membrane-spanning segment. At 225-249 (ANGKWHEWFPWLKTAACCDACANLK) the chain is on the extracellular side. Residues 250 to 270 (GAFFTAVLLIVVSMTVTMYLA) form a helical membrane-spanning segment. Residues 271–302 (DEMPLDKQDVDTSGGGGCAVFVDLFKSLRNLP) are Cytoplasmic-facing. The chain crosses the membrane as a helical span at residues 303–323 (PAMFKVLAVTAVTWLSWFPFI). The Extracellular segment spans residues 324 to 354 (QYNTDWMGREIYHGEPQGTAAKADVYDAGVR). Residues 355–375 (EGAMGLLFCSVALGVTSFVIP) form a helical membrane-spanning segment. The Cytoplasmic portion of the chain corresponds to 376-384 (KLCRRLTSK). Residues 385 to 405 (VVWSISNFLVFALMAVMVAVG) traverse the membrane as a helical segment. Topologically, residues 406–429 (MVSMRGYRPSLAAGLTGPDPTLKA) are extracellular. Residues 430–450 (VALVVFALIGIPQAVLFSVPW) form a helical membrane-spanning segment. Residues 451–465 (AVASEVTAEEGGGQG) lie on the Cytoplasmic side of the membrane. Residues 466–486 (LAIGVLNIAIVVPQLVIALTA) traverse the membrane as a helical segment. At 487–498 (GPIDGAFNKGNT) the chain is on the extracellular side. Residues 499 to 519 (PAFGIGGAFAFICGVLALIWL) form a helical membrane-spanning segment. The Cytoplasmic segment spans residues 520–535 (PKTRGVSNAAVVAGGH).

It belongs to the glycoside-pentoside-hexuronide (GPH) cation symporter transporter (TC 2.A.2.4) family. In terms of assembly, homodimer. As to expression, widely expressed. Highest expression in sink leaves and lowest in germinating seeds.

The protein resides in the cell membrane. It participates in glycan biosynthesis; sucrose metabolism. Functionally, responsible for the transport of sucrose into the cell, with the concomitant uptake of protons (symport system). Can also transport other glucosides such as maltose, arbutin, salicin, helicin, alpha-phenylglucoside and beta-phenylglucoside. The protein is Sucrose transport protein SUT5 (SUT5) of Oryza sativa subsp. japonica (Rice).